We begin with the raw amino-acid sequence, 924 residues long: TBC1 domain family member 2A (924 aa).

Positions M1–L38 are disordered. Positions M1–K167 are interaction with CADH1. Residues P42 to W140 form the PH domain. The segment at K228 to F296 is disordered. Basic and acidic residues predominate over residues I261–P270. The tract at residues S297–Q435 is interaction with RAC1. 3 coiled-coil regions span residues S303–I332, L361–Q418, and F444–K477. The Rab-GAP TBC domain occupies G621 to G813. The stretch at M871–R906 forms a coiled coil. Residue S916 is modified to Phosphoserine.

Interacts with activated RAC1 and CDH1.

The protein localises to the cytoplasm. It localises to the cytoplasmic vesicle. It is found in the cell junction. In terms of biological role, acts as a GTPase-activating protein for RAB7A. Signal effector acting as a linker between RAC1 and RAB7A, leading to RAB7A inactivation and subsequent inhibition of cadherin degradation and reduced cell-cell adhesion. This chain is TBC1 domain family member 2A (Tbc1d2), found in Rattus norvegicus (Rat).